The primary structure comprises 491 residues: Probable glycine dehydrogenase (decarboxylating) subunit 2 (491 aa).

An N6-(pyridoxal phosphate)lysine modification is found at K264.

Belongs to the GcvP family. C-terminal subunit subfamily. As to quaternary structure, the glycine cleavage system is composed of four proteins: P, T, L and H. In this organism, the P 'protein' is a heterodimer of two subunits. Pyridoxal 5'-phosphate is required as a cofactor.

It carries out the reaction N(6)-[(R)-lipoyl]-L-lysyl-[glycine-cleavage complex H protein] + glycine + H(+) = N(6)-[(R)-S(8)-aminomethyldihydrolipoyl]-L-lysyl-[glycine-cleavage complex H protein] + CO2. Its function is as follows. The glycine cleavage system catalyzes the degradation of glycine. The P protein binds the alpha-amino group of glycine through its pyridoxal phosphate cofactor; CO(2) is released and the remaining methylamine moiety is then transferred to the lipoamide cofactor of the H protein. The chain is Probable glycine dehydrogenase (decarboxylating) subunit 2 from Coxiella burnetii (strain Dugway 5J108-111).